Here is a 379-residue protein sequence, read N- to C-terminus: MSVDVKSAQSSKSDSLQAEPRPGERDKALNLVLGQIERNFGKGSIMRLGDASRMRVETFPTGALTLDLALGGGYPKGRVVEVYGPESSGKTTLTLHAIAEVQRRGGVAAFVDAEHALDPVYAASLGVDIENLLVSQPDTGEMALEIVDQLVRSAAVDIVVVDSVAALTPRSEIEGEMGDLAVGSQARLMSQAMRKITGNIGKSGCTVIFLNQLRLKIGVTYGNPETTTGGNALKFYASVRLDIRRIQTLKRGTEEYGIRAKVKVAKNKVAPPFRIAEFDILFGRGISTLGCLLDLAEETGVVIRKGAWYSYEGDNIGQGRDNTITWLEQNSEAQEQIEVLVRQKLTEGSEVTANSMRPLAAAARTAAKKPAVSLASEAA.

Residues 1–24 (MSVDVKSAQSSKSDSLQAEPRPGE) are disordered. Residues 7-16 (SAQSSKSDSL) show a composition bias toward polar residues. 84–91 (GPESSGKT) is an ATP binding site.

Belongs to the RecA family.

It is found in the cytoplasm. Can catalyze the hydrolysis of ATP in the presence of single-stranded DNA, the ATP-dependent uptake of single-stranded DNA by duplex DNA, and the ATP-dependent hybridization of homologous single-stranded DNAs. It interacts with LexA causing its activation and leading to its autocatalytic cleavage. The sequence is that of Protein RecA from Prochlorococcus marinus (strain MIT 9303).